The chain runs to 167 residues: Crossover junction endodeoxyribonuclease RuvC (167 aa).

Catalysis depends on residues aspartate 7, glutamate 67, and aspartate 140. Mg(2+) contacts are provided by aspartate 7, glutamate 67, and aspartate 140.

This sequence belongs to the RuvC family. As to quaternary structure, homodimer which binds Holliday junction (HJ) DNA. The HJ becomes 2-fold symmetrical on binding to RuvC with unstacked arms; it has a different conformation from HJ DNA in complex with RuvA. In the full resolvosome a probable DNA-RuvA(4)-RuvB(12)-RuvC(2) complex forms which resolves the HJ. Requires Mg(2+) as cofactor.

Its subcellular location is the cytoplasm. It carries out the reaction Endonucleolytic cleavage at a junction such as a reciprocal single-stranded crossover between two homologous DNA duplexes (Holliday junction).. The RuvA-RuvB-RuvC complex processes Holliday junction (HJ) DNA during genetic recombination and DNA repair. Endonuclease that resolves HJ intermediates. Cleaves cruciform DNA by making single-stranded nicks across the HJ at symmetrical positions within the homologous arms, yielding a 5'-phosphate and a 3'-hydroxyl group; requires a central core of homology in the junction. The consensus cleavage sequence is 5'-(A/T)TT(C/G)-3'. Cleavage occurs on the 3'-side of the TT dinucleotide at the point of strand exchange. HJ branch migration catalyzed by RuvA-RuvB allows RuvC to scan DNA until it finds its consensus sequence, where it cleaves and resolves the cruciform DNA. The polypeptide is Crossover junction endodeoxyribonuclease RuvC (Dehalococcoides mccartyi (strain ATCC BAA-2100 / JCM 16839 / KCTC 5957 / BAV1)).